A 762-amino-acid chain; its full sequence is 5-methyltetrahydropteroyltriglutamate--homocysteine methyltransferase (762 aa).

Residues 17 to 20 (REWK) and lysine 111 contribute to the 5-methyltetrahydropteroyltri-L-glutamate site. Residues 435 to 437 (IGS) and glutamate 488 each bind L-homocysteine. L-methionine-binding positions include 435-437 (IGS) and glutamate 488. Residues 519-520 (RC) and tryptophan 565 each bind 5-methyltetrahydropteroyltri-L-glutamate. Aspartate 603 is an L-homocysteine binding site. Aspartate 603 is a binding site for L-methionine. Glutamate 609 provides a ligand contact to 5-methyltetrahydropteroyltri-L-glutamate. 3 residues coordinate Zn(2+): histidine 645, cysteine 647, and glutamate 669. The active-site Proton donor is histidine 698. Zn(2+) is bound at residue cysteine 730.

The protein belongs to the vitamin-B12 independent methionine synthase family. It depends on Zn(2+) as a cofactor.

The enzyme catalyses 5-methyltetrahydropteroyltri-L-glutamate + L-homocysteine = tetrahydropteroyltri-L-glutamate + L-methionine. Its pathway is amino-acid biosynthesis; L-methionine biosynthesis via de novo pathway; L-methionine from L-homocysteine (MetE route): step 1/1. In terms of biological role, catalyzes the transfer of a methyl group from 5-methyltetrahydrofolate to homocysteine resulting in methionine formation. The sequence is that of 5-methyltetrahydropteroyltriglutamate--homocysteine methyltransferase from Bacillus cereus (strain ZK / E33L).